Here is a 212-residue protein sequence, read N- to C-terminus: Nitrile hydratase subunit beta (212 aa).

It belongs to the nitrile hydratase subunit beta family. Heterodimer of an alpha and a beta chain.

It carries out the reaction an aliphatic primary amide = an aliphatic nitrile + H2O. In terms of biological role, NHase catalyzes the hydration of various nitrile compounds to the corresponding amides. The polypeptide is Nitrile hydratase subunit beta (nthB) (Rhodococcus erythropolis (Arthrobacter picolinophilus)).